The sequence spans 107 residues: MKPDITFYRRFQADILAGRKTITIRDDSESHFQPGQRLMVGQYEDGRPFCEIEVIGVTPVMLAQLNAQHAAQENMTLDALRSVIGEIYPQIERLYVISFSLVRALAG.

The 97-residue stretch at threonine 6–valine 102 folds into the ASCH domain. Residue lysine 20 is the Proton acceptor of the active site. The active-site Nucleophile is threonine 23. The active-site Proton donor is glutamate 73.

This sequence belongs to the N(4)-acetylcytidine amidohydrolase family.

It carries out the reaction N(4)-acetylcytidine + H2O = cytidine + acetate + H(+). It catalyses the reaction N(4)-acetyl-2'-deoxycytidine + H2O = 2'-deoxycytidine + acetate + H(+). The catalysed reaction is N(4)-acetylcytosine + H2O = cytosine + acetate + H(+). Functionally, catalyzes the hydrolysis of N(4)-acetylcytidine (ac4C). This Edwardsiella ictaluri (strain 93-146) protein is N(4)-acetylcytidine amidohydrolase.